A 1584-amino-acid polypeptide reads, in one-letter code: Dicer-like protein 1 (1584 aa).

The tract at residues 31–60 is disordered; that stretch reads EDVVSDNDDRGNASDVESEDGVKRWTVNPE. In terms of domain architecture, Helicase ATP-binding spans 129-310; sequence LFERAKQQNT…RAAAELEALL (182 aa). Residue 142 to 149 coordinates ATP; the sequence is LDTGSGKT. A DEAH box motif is present at residues 255 to 258; it reads DEAH. The Helicase C-terminal domain occupies 448 to 621; the sequence is KVIMLVRILR…EALPEDRKLT (174 aa). The 91-residue stretch at 654–744 folds into the Dicer dsRNA-binding fold domain; that stretch reads SLVCLANFTA…QSVFTKQLPE (91 aa). The region spanning 894 to 1028 is the PAZ domain; sequence KALAYVSENE…LILEPMRISP (135 aa). 2 RNase III domains span residues 1052–1207 and 1258–1424; these read VALD…LTGQ and AKKF…VDSE. Mg(2+) is bound by residues E1298, D1410, and E1413. The DRBM domain maps to 1458 to 1545; it reads TFVANMMAHK…AKKAIKLLEG (88 aa). Residues C1470, H1516, C1557, and C1559 each contribute to the Zn(2+) site.

This sequence belongs to the helicase family. Dicer subfamily. It depends on Mg(2+) as a cofactor. Mn(2+) is required as a cofactor.

Dicer-like endonuclease involved in cleaving double-stranded RNA in the RNA interference (RNAi) pathway. Produces 21 to 25 bp dsRNAs (siRNAs) which target the selective destruction of homologous RNAs leading to sequence-specific suppression of gene expression, called post-transcriptional gene silencing (PTGS). Part of a broad host defense response against viral infection and transposons. Controls the expression of the non-LTR retrotransposon Tad in the African strain, Adiomopoume. This Neurospora crassa (strain ATCC 24698 / 74-OR23-1A / CBS 708.71 / DSM 1257 / FGSC 987) protein is Dicer-like protein 1 (dcl-1).